A 407-amino-acid chain; its full sequence is Peptidase T (407 aa).

Histidine 82 lines the Zn(2+) pocket. Residue aspartate 84 is part of the active site. Aspartate 143 is a binding site for Zn(2+). Glutamate 177 (proton acceptor) is an active-site residue. 3 residues coordinate Zn(2+): glutamate 178, aspartate 200, and histidine 382.

The protein belongs to the peptidase M20B family. The cofactor is Zn(2+).

The protein resides in the cytoplasm. The catalysed reaction is Release of the N-terminal residue from a tripeptide.. In terms of biological role, cleaves the N-terminal amino acid of tripeptides. The protein is Peptidase T of Streptococcus pyogenes serotype M18 (strain MGAS8232).